Consider the following 211-residue polypeptide: Probable GTP-binding protein EngB (211 aa).

The 174-residue stretch at 22 to 195 folds into the EngB-type G domain; the sequence is PFPEVAFAGK…WQLIDSYVLP (174 aa). GTP is bound by residues 30–37, 57–61, 75–78, 142–145, and 174–176; these read GKSNVGKS, GKTQT, DLPG, TKLD, and FSS. Mg(2+)-binding residues include Ser37 and Thr59.

The protein belongs to the TRAFAC class TrmE-Era-EngA-EngB-Septin-like GTPase superfamily. EngB GTPase family. Mg(2+) is required as a cofactor.

Its function is as follows. Necessary for normal cell division and for the maintenance of normal septation. This Lachnospira eligens (strain ATCC 27750 / DSM 3376 / VPI C15-48 / C15-B4) (Eubacterium eligens) protein is Probable GTP-binding protein EngB.